We begin with the raw amino-acid sequence, 226 residues long: ATP synthase F(0) complex subunit a (226 aa).

6 helical membrane passes run Phe6–Phe26, Trp68–Leu88, Gln97–Phe117, Ile138–Val158, Ile164–Ile184, and Ala189–Ile209.

The protein belongs to the ATPase A chain family. Component of the ATP synthase complex composed at least of ATP5F1A/subunit alpha, ATP5F1B/subunit beta, ATP5MC1/subunit c (homooctomer), MT-ATP6/subunit a, MT-ATP8/subunit 8, ATP5ME/subunit e, ATP5MF/subunit f, ATP5MG/subunit g, ATP5MK/subunit k, ATP5MJ/subunit j, ATP5F1C/subunit gamma, ATP5F1D/subunit delta, ATP5F1E/subunit epsilon, ATP5PF/subunit F6, ATP5PB/subunit b, ATP5PD/subunit d, ATP5PO/subunit OSCP. ATP synthase complex consists of a soluble F(1) head domain (subunits alpha(3) and beta(3)) - the catalytic core - and a membrane F(0) domain - the membrane proton channel (subunits c, a, 8, e, f, g, k and j). These two domains are linked by a central stalk (subunits gamma, delta, and epsilon) rotating inside the F1 region and a stationary peripheral stalk (subunits F6, b, d, and OSCP). Interacts with DNAJC30; interaction is direct.

Its subcellular location is the mitochondrion inner membrane. The enzyme catalyses H(+)(in) = H(+)(out). Subunit a, of the mitochondrial membrane ATP synthase complex (F(1)F(0) ATP synthase or Complex V) that produces ATP from ADP in the presence of a proton gradient across the membrane which is generated by electron transport complexes of the respiratory chain. ATP synthase complex consist of a soluble F(1) head domain - the catalytic core - and a membrane F(1) domain - the membrane proton channel. These two domains are linked by a central stalk rotating inside the F(1) region and a stationary peripheral stalk. During catalysis, ATP synthesis in the catalytic domain of F(1) is coupled via a rotary mechanism of the central stalk subunits to proton translocation. With the subunit c (ATP5MC1), forms the proton-conducting channel in the F(0) domain, that contains two crucial half-channels (inlet and outlet) that facilitate proton movement from the mitochondrial intermembrane space (IMS) into the matrix. Protons are taken up via the inlet half-channel and released through the outlet half-channel, following a Grotthuss mechanism. The sequence is that of ATP synthase F(0) complex subunit a from Ovis aries (Sheep).